A 222-amino-acid polypeptide reads, in one-letter code: Pyridoxal phosphate homeostasis protein (222 aa).

N6-(pyridoxal phosphate)lysine is present on K35.

It belongs to the pyridoxal phosphate-binding protein YggS/PROSC family.

In terms of biological role, pyridoxal 5'-phosphate (PLP)-binding protein, which is involved in PLP homeostasis. In Helicobacter pylori (strain J99 / ATCC 700824) (Campylobacter pylori J99), this protein is Pyridoxal phosphate homeostasis protein.